The following is an 813-amino-acid chain: Lon protease (813 aa).

Positions 14 to 207 constitute a Lon N-terminal domain; sequence LPLLPLRGII…ILTEILAREM (194 aa). Residue 359–366 participates in ATP binding; sequence GPPGVGKT. The Lon proteolytic domain maps to 595–776; it reads ESQVGVATGL…DQVIREALLE (182 aa). Active-site residues include S682 and K725.

The protein belongs to the peptidase S16 family. In terms of assembly, homohexamer. Organized in a ring with a central cavity.

It localises to the cytoplasm. The enzyme catalyses Hydrolysis of proteins in presence of ATP.. ATP-dependent serine protease that mediates the selective degradation of mutant and abnormal proteins as well as certain short-lived regulatory proteins. Required for cellular homeostasis and for survival from DNA damage and developmental changes induced by stress. Degrades polypeptides processively to yield small peptide fragments that are 5 to 10 amino acids long. Binds to DNA in a double-stranded, site-specific manner. This is Lon protease from Heliobacterium modesticaldum (strain ATCC 51547 / Ice1).